Reading from the N-terminus, the 521-residue chain is Bifunctional purine biosynthesis protein PurH (521 aa).

An MGS-like domain is found at 1–147; the sequence is MAKITRALIS…KNNADVTVVV (147 aa).

This sequence belongs to the PurH family.

It carries out the reaction (6R)-10-formyltetrahydrofolate + 5-amino-1-(5-phospho-beta-D-ribosyl)imidazole-4-carboxamide = 5-formamido-1-(5-phospho-D-ribosyl)imidazole-4-carboxamide + (6S)-5,6,7,8-tetrahydrofolate. The catalysed reaction is IMP + H2O = 5-formamido-1-(5-phospho-D-ribosyl)imidazole-4-carboxamide. The protein operates within purine metabolism; IMP biosynthesis via de novo pathway; 5-formamido-1-(5-phospho-D-ribosyl)imidazole-4-carboxamide from 5-amino-1-(5-phospho-D-ribosyl)imidazole-4-carboxamide (10-formyl THF route): step 1/1. It functions in the pathway purine metabolism; IMP biosynthesis via de novo pathway; IMP from 5-formamido-1-(5-phospho-D-ribosyl)imidazole-4-carboxamide: step 1/1. This is Bifunctional purine biosynthesis protein PurH from Geotalea uraniireducens (strain Rf4) (Geobacter uraniireducens).